We begin with the raw amino-acid sequence, 353 residues long: MSEPLKPRIDFAEPLKEEPTSVFKAQQTFSEAESRTFAPAAIDERPEDEGVAEAAVDAALRPKRSLWRKMVMGGLALFGASVVGQGVQWTMNAWQTQDWVALGGCAAGALIVGAGVGSVVTEWRRLWRLRQRAHERDEARELLHSHSVGKGRAFCEKLAQQAGIDQSHPALQRWYAAIHETQNDREIVGLYAHLVQPVLDAQARREISRFAAESTLMIAVSPLALVDMAFIAWRNLRLINRIATLYGIELGYYSRLRLFRLVLLNIAFAGASELVREVGMDWMSQDLAARLSTRAAQGIGAGLLTARLGIKAMELCRPLPWIDNDKPRLGDFRRQLIGQLKETLQKSKSSPEK.

3 helical membrane passes run 70–90, 100–120, and 213–233; these read MVMG…VQWT, VALG…GSVV, and ESTL…FIAW.

This sequence belongs to the UPF0283 family.

Its subcellular location is the cell inner membrane. This Salmonella schwarzengrund (strain CVM19633) protein is UPF0283 membrane protein YcjF.